The primary structure comprises 160 residues: SsrA-binding protein (160 aa).

The protein belongs to the SmpB family.

The protein resides in the cytoplasm. Its function is as follows. Required for rescue of stalled ribosomes mediated by trans-translation. Binds to transfer-messenger RNA (tmRNA), required for stable association of tmRNA with ribosomes. tmRNA and SmpB together mimic tRNA shape, replacing the anticodon stem-loop with SmpB. tmRNA is encoded by the ssrA gene; the 2 termini fold to resemble tRNA(Ala) and it encodes a 'tag peptide', a short internal open reading frame. During trans-translation Ala-aminoacylated tmRNA acts like a tRNA, entering the A-site of stalled ribosomes, displacing the stalled mRNA. The ribosome then switches to translate the ORF on the tmRNA; the nascent peptide is terminated with the 'tag peptide' encoded by the tmRNA and targeted for degradation. The ribosome is freed to recommence translation, which seems to be the essential function of trans-translation. This chain is SsrA-binding protein, found in Rhodospirillum rubrum (strain ATCC 11170 / ATH 1.1.1 / DSM 467 / LMG 4362 / NCIMB 8255 / S1).